Here is a 403-residue protein sequence, read N- to C-terminus: Large ribosomal subunit protein uL3 (403 aa).

The disordered stretch occupies residues 1-37 (MSHRKFSAPRHGSLGFLPRKRSSRHRGKVKSFPKDDP). Serine 13 is subject to Phosphoserine. Over residues 18-31 (PRKRSSRHRGKVKS) the composition is skewed to basic residues. A Glycyl lysine isopeptide (Lys-Gly) (interchain with G-Cter in SUMO2) cross-link involves residue lysine 39. Lysine 136 is subject to N6-acetyllysine. Residues lysine 224 and lysine 226 each participate in a glycyl lysine isopeptide (Lys-Gly) (interchain with G-Cter in SUMO2) cross-link. Histidine 245 carries the tele-methylhistidine modification. Residues lysine 286 and lysine 294 each carry the N6-acetyllysine; alternate modification. Lysine 286 participates in a covalent cross-link: Glycyl lysine isopeptide (Lys-Gly) (interchain with G-Cter in SUMO2); alternate. A Glycyl lysine isopeptide (Lys-Gly) (interchain with G-Cter in SUMO1); alternate cross-link involves residue lysine 294. A Phosphoserine modification is found at serine 304. At lysine 366 the chain carries N6-acetyllysine; alternate. A Glycyl lysine isopeptide (Lys-Gly) (interchain with G-Cter in SUMO2); alternate cross-link involves residue lysine 366. Residue lysine 373 is modified to N6-acetyllysine. Residues lysine 386, lysine 393, and lysine 399 each participate in a glycyl lysine isopeptide (Lys-Gly) (interchain with G-Cter in SUMO2) cross-link.

The protein belongs to the universal ribosomal protein uL3 family. Component of the large ribosomal subunit. Interacts with DHX33. In terms of processing, constitutively monomethylated at His-245 by METTL18. Methylation at His-245 regulates translation elongation by slowing ribosome traversal on tyrosine codons: slower elongation provides enough time for proper folding of synthesized proteins and prevents cellular aggregation of tyrosine-rich proteins. It is not required for incorporation of RPL3 into ribosomes.

The protein resides in the nucleus. Its subcellular location is the nucleolus. It localises to the cytoplasm. Functionally, component of the large ribosomal subunit. The ribosome is a large ribonucleoprotein complex responsible for the synthesis of proteins in the cell. The sequence is that of Large ribosomal subunit protein uL3 (Rpl3) from Rattus norvegicus (Rat).